A 1038-amino-acid polypeptide reads, in one-letter code: Translation initiation factor IF-2 (1038 aa).

Disordered stretches follow at residues 39–346 (TISE…KWQE) and 403–451 (KPKA…PEKV). Over residues 103–125 (RNTTSNAPEASVANNQIASSEAN) the composition is skewed to polar residues. The span at 157-176 (PQKPAAPEAEPEAQSQAPAK) shows a compositional bias: low complexity. 2 stretches are compositionally biased toward basic and acidic residues: residues 178–197 (AVEKPEKSAQPRPGKPERQP) and 226–243 (PILKRDRPRREDERDQAK). The span at 407-423 (ARAATAATAAPISSPTT) shows a compositional bias: low complexity. A compositionally biased stretch (basic and acidic residues) spans 431 to 450 (NNRDQNRRQETEVKRERPEK). A tr-type G domain is found at 532–705 (RRPPVVTIMG…LLVAEVGELS (174 aa)). The interval 541–548 (GHVDHGKT) is G1. 541 to 548 (GHVDHGKT) contacts GTP. The tract at residues 566 to 570 (GITQH) is G2. The G3 stretch occupies residues 591–594 (DTPG). Residues 591–595 (DTPGH) and 645–648 (NKID) contribute to the GTP site. The G4 stretch occupies residues 645–648 (NKID). The segment at 681-683 (SAI) is G5.

This sequence belongs to the TRAFAC class translation factor GTPase superfamily. Classic translation factor GTPase family. IF-2 subfamily.

Its subcellular location is the cytoplasm. One of the essential components for the initiation of protein synthesis. Protects formylmethionyl-tRNA from spontaneous hydrolysis and promotes its binding to the 30S ribosomal subunits. Also involved in the hydrolysis of GTP during the formation of the 70S ribosomal complex. The protein is Translation initiation factor IF-2 of Trichormus variabilis (strain ATCC 29413 / PCC 7937) (Anabaena variabilis).